The primary structure comprises 448 residues: Noelin-2 (448 aa).

A signal peptide spans 1 to 14 (MRKLRQTGTTIAGG). 2 coiled-coil regions span residues 52-79 (RDGRSRELRQLMEKVQNVSQSMEVLELR) and 130-187 (LEQY…AQKL). N-linked (GlcNAc...) asparagine glycans are attached at residues asparagine 68, asparagine 149, asparagine 269, asparagine 304, asparagine 393, and asparagine 435. One can recognise an Olfactomedin-like domain in the interval 188 to 440 (GCGKLTGVSN…QVLYNVTLFH (253 aa)). A disulfide bond links cysteine 189 and cysteine 371.

Peripherally associated with AMPAR complex. AMPAR complex consists of an inner core made of 4 pore-forming GluA/GRIA proteins (GRIA1, GRIA2, GRIA3 and GRIA4) and 4 major auxiliary subunits arranged in a twofold symmetry. One of the two pairs of distinct binding sites is occupied either by CNIH2, CNIH3 or CACNG2, CACNG3. The other harbors CACNG2, CACNG3, CACNG4, CACNG8 or GSG1L. This inner core of AMPAR complex is complemented by outer core constituents binding directly to the GluA/GRIA proteins at sites distinct from the interaction sites of the inner core constituents. Outer core constituents include at least PRRT1, PRRT2, CKAMP44/SHISA9, FRRS1L and NRN1. The proteins of the inner and outer core serve as a platform for other, more peripherally associated AMPAR constituents, including OLFM2. Alone or in combination, these auxiliary subunits control the gating and pharmacology of the AMPAR complex and profoundly impact their biogenesis and protein processing. Interacts with GRIA2. Interacts with OLFM1 and OLFM3. Interacts with SRF; the interaction promotes dissociation of SRF from the transcriptional repressor HEY2. Interacts with RUNX2. Expressed in the brain (at protein level). In the developing eye, first detected at 12 dpc in the retinal pigmented epithelium and preferentially expressed in differentiating retinal ganglion cells between 15 and 18 dpc. In the brain, expression is detected mainly in the olfactory bulb, cortex, piriform cortex, olfactory trabeculae, and inferior and superior colliculus. In the adult eye, expression is detected mainly in retinal ganglion cells. Expressed in carotid arteries.

Its subcellular location is the secreted. It localises to the synapse. It is found in the membrane. The protein resides in the nucleus. The protein localises to the cytoplasm. Involved in transforming growth factor beta (TGF-beta)-induced smooth muscle differentiation. TGF-beta induces expression and nuclear translocation of OLFM2 where it binds to SRF, causing its dissociation from the transcriptional repressor HEY2/HERP1 and facilitating binding of SRF to target genes. Plays a role in AMPAR complex organization. Is a regulator of vascular smooth-muscle cell (SMC) phenotypic switching, that acts by promoting RUNX2 and inhibiting MYOCD binding to SRF. SMC phenotypic switching is the process through which vascular SMCs undergo transition between a quiescent contractile phenotype and a proliferative synthetic phenotype in response to pathological stimuli. SMC phenotypic plasticity is essential for vascular development and remodeling. The sequence is that of Noelin-2 (Olfm2) from Mus musculus (Mouse).